A 441-amino-acid polypeptide reads, in one-letter code: Diuretic hormone receptor (441 aa).

3 N-linked (GlcNAc...) asparagine glycosylation sites follow: asparagine 99, asparagine 107, and asparagine 112. Residues 135–158 (FVFFVGFCLSLVAIAVAIWIFLYF) form a helical membrane-spanning segment. Topologically, residues 159 to 166 (KDLRCLRN) are cytoplasmic. A helical membrane pass occupies residues 167–187 (TIHTNLMATYICNDATWIISA). The Extracellular portion of the chain corresponds to 188 to 194 (VVQEYVE). Residues 195-224 (NGGLCSVLAVLMHYFYLTNFFWMFVEGLYL) form a helical membrane-spanning segment. Residues 225–238 (FLLVVATFTGEKVK) lie on the Cytoplasmic side of the membrane. Residues 239 to 260 (LQIYIIIGWGIPGVIVVTWAII) form a helical membrane-spanning segment. Over 261 to 291 (KHLGKTAPDNAGESHPMVLLIKHCPWMAEDY) the chain is Extracellular. A helical transmembrane segment spans residues 292-315 (FDWIHQAPVITVLAVNLVFLFSIM). Topologically, residues 316–338 (WVLITKLQSANTAETQQYRKATK) are cytoplasmic. A helical transmembrane segment spans residues 339 to 357 (ALLVLFPLLGITYILMMQG). Over 358–371 (PMDGVAGHVFRNAQ) the chain is Extracellular. A helical transmembrane segment spans residues 372-391 (ALLLSLQGFTVALFYCFLNT). Residues 392–441 (EVQNTLRHRMSRWRETRTVGGGRRYTLSGHSKDWSPRSRTESIRCLQHRS) are Cytoplasmic-facing.

This sequence belongs to the G-protein coupled receptor 2 family. In terms of tissue distribution, expressed in Malpighian tubules.

It localises to the cell membrane. Its function is as follows. Receptor for the insect diurectic hormone. The activity of this receptor is mediated by G proteins which activate adenylyl cyclase. The protein is Diuretic hormone receptor of Acheta domesticus (House cricket).